Here is a 2621-residue protein sequence, read N- to C-terminus: Nonribosomal peptide synthetase dtpA (2621 aa).

The adenylation 1 stretch occupies residues 446 to 844; the sequence is CMEQPNAEAI…GRKDQQVKIR (399 aa). The Carrier 1 domain maps to 978-1054; sequence QPYTQVEETL…EVALYSRALS (77 aa). Residue Ser-1015 is modified to O-(pantetheine 4'-phosphoryl)serine. Residues 1095-1506 are condensation 1; it reads EDIYPCTALQ…LNQLELAGPQ (412 aa). Residues 1534-1930 are adenylation 2; that stretch reads SRTQPGASAI…GRRDNQVKLR (397 aa). One can recognise a Carrier 2 domain in the interval 2071–2147; the sequence is QPSTTQEALV…LFCTNASTSI (77 aa). Residue Ser-2108 is modified to O-(pantetheine 4'-phosphoryl)serine. Residues 2220–2618 are condensation 2; that stretch reads AIFKLHGSKV…HSARPIASID (399 aa).

Belongs to the NRP synthetase family.

It functions in the pathway alkaloid biosynthesis. Functionally, nonribosomal peptide synthetase; part of the gene cluster that mediates the biosynthesis of the dimeric diketopiperazine alkaloid ditryptophenaline. The nonribosomal peptide synthase dtpA accepts L-tryptophan and L-phenylalanine as its substrates and forms the phenylalanyl-tryptophanyl cyclic dipeptide product cyclophenylalanyltryptophenyl. The N-methyltransferase dtpB is responsible for the N-methylation of cyclophenylalanyltryptophenyl to yield cyclo-N-methylphenylalanyltryptophenyl. The cytochrome P450 monooxygenase is responsible not only for pyrroloindole ring formation but also for concurrent dimerization of N-methylphenylalanyltryptophanyl diketopiperazine monomers into a homodimeric product. This Aspergillus flavus (strain ATCC 200026 / FGSC A1120 / IAM 13836 / NRRL 3357 / JCM 12722 / SRRC 167) protein is Nonribosomal peptide synthetase dtpA.